The sequence spans 383 residues: 3-phytase (383 aa).

Positions Met1–Ala26 are cleaved as a signal peptide. Positions Lys27–Lys29 are excised as a propeptide. A BPP domain is found at Leu30–Ile362.

It depends on Ca(2+) as a cofactor.

It localises to the secreted. It catalyses the reaction 1D-myo-inositol hexakisphosphate + H2O = 1D-myo-inositol 1,2,4,5,6-pentakisphosphate + phosphate. In terms of biological role, catalyzes the hydrolysis of inorganic orthophosphate from phytate. Only phytate, ADP, and ATP were hydrolyzed (100, 75, and 50% of the relative activity, respectively). This is 3-phytase (phyC) from Bacillus subtilis.